The primary structure comprises 122 residues: Large ribosomal subunit protein uL22 (122 aa).

The tract at residues 102–122 (VAEGKEMKSSKSHKKNQAEGK) is disordered.

This sequence belongs to the universal ribosomal protein uL22 family. As to quaternary structure, part of the 50S ribosomal subunit.

This protein binds specifically to 23S rRNA; its binding is stimulated by other ribosomal proteins, e.g. L4, L17, and L20. It is important during the early stages of 50S assembly. It makes multiple contacts with different domains of the 23S rRNA in the assembled 50S subunit and ribosome. Its function is as follows. The globular domain of the protein is located near the polypeptide exit tunnel on the outside of the subunit, while an extended beta-hairpin is found that lines the wall of the exit tunnel in the center of the 70S ribosome. This Helicobacter pylori (strain HPAG1) protein is Large ribosomal subunit protein uL22.